The primary structure comprises 407 residues: MSSSSLILLFSTLSLFLNVSLADNHTAVVITTSDTPPPLPPPSPPPRHNFTSSLMPGIAVVIAVLTAFFSLTFLLLLYVKHCKRRNGSVYVNHPQRFAITRYGGGYYNGGGVVGGRKNSGIDRSVIESLPVFRFGALSGHKDGLECAVCLARFEPTEVLRLLPKCKHAFHVECVDTWLDAHSTCPLCRYRVDPEDILLIGDCNSWFELQFSKDESNSVNNNPPGLTRFIPVSRISGRHSSAGERASRLNEIRTSSSYKSNPMSFRRSLDSSLKVNDAGEEKSESVAVNCLDRLQRKDGLLLIPNRESFEGRFEHRIIISGGNRDDQRWSEVRPSDLLYLRSEMILSDCRKLAAAEGGRDVINGRSVSELTGIERRRRWGGEPRQRQATAVISRWLAWSHRASASSIV.

A signal peptide spans M1–A22. The helical transmembrane segment at G57 to L77 threads the bilayer. The RING-type; atypical zinc finger occupies C146–R188.

It belongs to the RING-type zinc finger family. ATL subfamily.

It localises to the membrane. The catalysed reaction is S-ubiquitinyl-[E2 ubiquitin-conjugating enzyme]-L-cysteine + [acceptor protein]-L-lysine = [E2 ubiquitin-conjugating enzyme]-L-cysteine + N(6)-ubiquitinyl-[acceptor protein]-L-lysine.. It functions in the pathway protein modification; protein ubiquitination. The chain is RING-H2 finger protein ATL43 (ATL43) from Arabidopsis thaliana (Mouse-ear cress).